Here is a 470-residue protein sequence, read N- to C-terminus: Serine carboxypeptidase ctsa-4.1 (470 aa).

The first 19 residues, Met-1 to Ala-19, serve as a signal peptide directing secretion. Asn-132 carries an N-linked (GlcNAc...) asparagine glycan. Ser-169 is a catalytic residue. N-linked (GlcNAc...) asparagine glycosylation is present at Asn-316. Residue Asp-380 is part of the active site. The N-linked (GlcNAc...) asparagine glycan is linked to Asn-396. His-441 is an active-site residue.

It belongs to the peptidase S10 family.

It carries out the reaction Release of a C-terminal amino acid with broad specificity.. The chain is Serine carboxypeptidase ctsa-4.1 from Caenorhabditis elegans.